Here is a 206-residue protein sequence, read N- to C-terminus: Large ribosomal subunit protein uL4 (206 aa).

The disordered stretch occupies residues 63–97 (MYKQKGTGRARHHSARAPQFRGGGKAHGPVVRSHE). Over residues 64–77 (YKQKGTGRARHHSA) the composition is skewed to basic residues.

The protein belongs to the universal ribosomal protein uL4 family. As to quaternary structure, part of the 50S ribosomal subunit.

Functionally, one of the primary rRNA binding proteins, this protein initially binds near the 5'-end of the 23S rRNA. It is important during the early stages of 50S assembly. It makes multiple contacts with different domains of the 23S rRNA in the assembled 50S subunit and ribosome. Forms part of the polypeptide exit tunnel. The polypeptide is Large ribosomal subunit protein uL4 (Rhizobium etli (strain CIAT 652)).